The primary structure comprises 150 residues: Urease accessory protein UreE (150 aa).

This sequence belongs to the UreE family.

It is found in the cytoplasm. Functionally, involved in urease metallocenter assembly. Binds nickel. Probably functions as a nickel donor during metallocenter assembly. The protein is Urease accessory protein UreE of Staphylococcus saprophyticus subsp. saprophyticus (strain ATCC 15305 / DSM 20229 / NCIMB 8711 / NCTC 7292 / S-41).